We begin with the raw amino-acid sequence, 780 residues long: B3 domain-containing transcription repressor VAL2 (780 aa).

The segment at residues 286 to 387 is a DNA-binding region (TF-B3); that stretch reads FEKVLSASDA…KLVMGYRKAT (102 aa). The segment at 515–565 adopts a CW-type zinc-finger fold; that stretch reads TGEQEQWVQCDACGKWRQLPVDILLPPKWSCSDNLLDPGRSSCSAPDELSP. Residues Cys-524, Cys-527, Cys-545, and Cys-557 each coordinate Zn(2+). 3 disordered regions span residues 577 to 608, 669 to 695, and 743 to 780; these read EFKRRRLASSNEKLNQSQDASALNSLGNAGIT, KRNKGEAGQASQQAQSQSECRDETEVE, and NTAGEQQSSDMVSTEHGSSSAAQETEKDTTNGAHDPVN. Polar residues predominate over residues 584-603; it reads ASSNEKLNQSQDASALNSLG. The span at 674 to 686 shows a compositional bias: low complexity; the sequence is EAGQASQQAQSQS. The segment covering 743–765 has biased composition (polar residues); that stretch reads NTAGEQQSSDMVSTEHGSSSAAQ.

It is found in the nucleus. In terms of biological role, transcriptional repressor of gene expression involved in embryonic pathways, such as LEC1, ABI3, and FUS3. Repressor of the sugar-inducible genes involved in the seed maturation program in seedlings. Plays an essential role in regulating the transition from seed maturation to seedling growth. Functionally redundant with VAL1/HSI2. This chain is B3 domain-containing transcription repressor VAL2 (VAL2), found in Arabidopsis thaliana (Mouse-ear cress).